Here is a 114-residue protein sequence, read N- to C-terminus: NAD(P)H-quinone oxidoreductase subunit M (114 aa).

This sequence belongs to the complex I NdhM subunit family. NDH-1 can be composed of about 15 different subunits; different subcomplexes with different compositions have been identified which probably have different functions.

The protein localises to the cellular thylakoid membrane. The catalysed reaction is a plastoquinone + NADH + (n+1) H(+)(in) = a plastoquinol + NAD(+) + n H(+)(out). The enzyme catalyses a plastoquinone + NADPH + (n+1) H(+)(in) = a plastoquinol + NADP(+) + n H(+)(out). NDH-1 shuttles electrons from an unknown electron donor, via FMN and iron-sulfur (Fe-S) centers, to quinones in the respiratory and/or the photosynthetic chain. The immediate electron acceptor for the enzyme in this species is believed to be plastoquinone. Couples the redox reaction to proton translocation, and thus conserves the redox energy in a proton gradient. Cyanobacterial NDH-1 also plays a role in inorganic carbon-concentration. The chain is NAD(P)H-quinone oxidoreductase subunit M from Acaryochloris marina (strain MBIC 11017).